A 147-amino-acid chain; its full sequence is Hemoglobin subunit beta (147 aa).

Residues 2–147 (EWTDAERSAI…VVSALCRQYH (146 aa)) enclose the Globin domain. Heme b is bound by residues histidine 63 and histidine 92.

Belongs to the globin family. In terms of assembly, heterotetramer of two alpha chains and two beta chains. In terms of tissue distribution, red blood cells.

In terms of biological role, involved in oxygen transport from gills to the various peripheral tissues. In Carassius auratus (Goldfish), this protein is Hemoglobin subunit beta (hbb).